A 92-amino-acid chain; its full sequence is C-C motif chemokine 4 (92 aa).

A signal peptide spans 1-23; sequence MKLGVTVLSVALLVAALCPPALS. Cystine bridges form between Cys34-Cys58 and Cys35-Cys74.

It belongs to the intercrine beta (chemokine CC) family. As to quaternary structure, homodimer.

Its subcellular location is the secreted. Functionally, monokine with inflammatory and chemokinetic properties. The chain is C-C motif chemokine 4 (CCL4) from Oryctolagus cuniculus (Rabbit).